Reading from the N-terminus, the 186-residue chain is MISSNDFRTGTSIEIDGAVWRVVEFLHVKPGKGSAFVRTKLKSVKNGSVVEKTFRAGEMLPQALLEKSSLQHTYMEGDDYVFMDMSSYEETRLTAAQIGDSRKYLKEGMEVNVVSWNDTPLEVELPNSVVLEIKETDPGVKGDTATGGTKPAILETGAQVMVPLFLSIGEKIKVDTRNDSYLGREN.

It belongs to the elongation factor P family.

The protein localises to the cytoplasm. It participates in protein biosynthesis; polypeptide chain elongation. Its function is as follows. Involved in peptide bond synthesis. Stimulates efficient translation and peptide-bond synthesis on native or reconstituted 70S ribosomes in vitro. Probably functions indirectly by altering the affinity of the ribosome for aminoacyl-tRNA, thus increasing their reactivity as acceptors for peptidyl transferase. This Synechococcus sp. (strain CC9902) protein is Elongation factor P.